The chain runs to 136 residues: Putative covalently bound cell wall protein 22 (136 aa).

Positions Met-1–Ala-18 are cleaved as a signal peptide. Residues Asn-21 and Asn-82 are each glycosylated (N-linked (GlcNAc...) asparagine). Residues Pro-73 to Val-110 form a disordered region. Residues Lys-99 to Val-110 are compositionally biased toward low complexity. Gly-115 is lipidated: GPI-anchor amidated glycine. The propeptide at Ala-116–Leu-136 is removed in mature form.

The protein belongs to the PGA59 family. In terms of processing, the GPI-anchor is attached to the protein in the endoplasmic reticulum and serves to target the protein to the cell surface. There, the glucosamine-inositol phospholipid moiety is cleaved off and the GPI-modified mannoprotein is covalently attached via its lipidless GPI glycan remnant to the 1,6-beta-glucan of the outer cell wall layer.

It localises to the secreted. The protein resides in the cell wall. Its subcellular location is the membrane. Its function is as follows. Cell wall protein necessary for cell wall integrity. This is Putative covalently bound cell wall protein 22 (CCW22) from Saccharomyces cerevisiae (strain ATCC 204508 / S288c) (Baker's yeast).